The sequence spans 447 residues: GTPase Der (447 aa).

EngA-type G domains lie at 3–167 and 181–354; these read PVVA…NLPD and IKLA…KSAT. Residues 9-16, 56-60, 119-122, 187-194, 234-238, and 299-302 contribute to the GTP site; these read GRPNVGKS, DTGGF, NKAE, DTAGL, and NKWD. The 85-residue stretch at 355–439 folds into the KH-like domain; it reads RKMSTPVLTR…PLRIQFKSSQ (85 aa).

This sequence belongs to the TRAFAC class TrmE-Era-EngA-EngB-Septin-like GTPase superfamily. EngA (Der) GTPase family. In terms of assembly, associates with the 50S ribosomal subunit.

Its function is as follows. GTPase that plays an essential role in the late steps of ribosome biogenesis. The sequence is that of GTPase Der from Variovorax paradoxus (strain S110).